The sequence spans 503 residues: Aspartyl/glutamyl-tRNA(Asn/Gln) amidotransferase subunit B (503 aa).

It belongs to the GatB/GatE family. GatB subfamily. In terms of assembly, heterotrimer of A, B and C subunits.

The enzyme catalyses L-glutamyl-tRNA(Gln) + L-glutamine + ATP + H2O = L-glutaminyl-tRNA(Gln) + L-glutamate + ADP + phosphate + H(+). The catalysed reaction is L-aspartyl-tRNA(Asn) + L-glutamine + ATP + H2O = L-asparaginyl-tRNA(Asn) + L-glutamate + ADP + phosphate + 2 H(+). In terms of biological role, allows the formation of correctly charged Asn-tRNA(Asn) or Gln-tRNA(Gln) through the transamidation of misacylated Asp-tRNA(Asn) or Glu-tRNA(Gln) in organisms which lack either or both of asparaginyl-tRNA or glutaminyl-tRNA synthetases. The reaction takes place in the presence of glutamine and ATP through an activated phospho-Asp-tRNA(Asn) or phospho-Glu-tRNA(Gln). The chain is Aspartyl/glutamyl-tRNA(Asn/Gln) amidotransferase subunit B from Mycolicibacterium smegmatis (strain ATCC 700084 / mc(2)155) (Mycobacterium smegmatis).